Reading from the N-terminus, the 373-residue chain is D-alanine--D-alanine ligase (373 aa).

The 208-residue stretch at 156–363 (KKLLAADGLP…YPTLLATMIE (208 aa)) folds into the ATP-grasp domain. 184 to 239 (CERLGLPVFVKPARGGSSIGVSRVSSWDQLPAAVARARRHDPKVIVEAAISGRELE) contacts ATP. Mg(2+) is bound by residues aspartate 318, glutamate 330, and asparagine 332.

This sequence belongs to the D-alanine--D-alanine ligase family. Mg(2+) is required as a cofactor. It depends on Mn(2+) as a cofactor.

Its subcellular location is the cytoplasm. It carries out the reaction 2 D-alanine + ATP = D-alanyl-D-alanine + ADP + phosphate + H(+). It functions in the pathway cell wall biogenesis; peptidoglycan biosynthesis. Cell wall formation. This is D-alanine--D-alanine ligase from Mycobacterium bovis (strain BCG / Pasteur 1173P2).